A 187-amino-acid polypeptide reads, in one-letter code: UPF0301 protein PC1_3712 (187 aa).

The protein belongs to the UPF0301 (AlgH) family.

The chain is UPF0301 protein PC1_3712 from Pectobacterium carotovorum subsp. carotovorum (strain PC1).